The chain runs to 218 residues: Small ribosomal subunit protein uS3 (218 aa).

The KH type-2 domain maps to 38-106; it reads IREYLTKRLS…RVHINIVEIK (69 aa).

This sequence belongs to the universal ribosomal protein uS3 family. As to quaternary structure, part of the 30S ribosomal subunit. Forms a tight complex with proteins S10 and S14.

Its function is as follows. Binds the lower part of the 30S subunit head. Binds mRNA in the 70S ribosome, positioning it for translation. The sequence is that of Small ribosomal subunit protein uS3 from Anoxybacillus flavithermus (strain DSM 21510 / WK1).